Consider the following 145-residue polypeptide: Large ribosomal subunit protein uL15 (145 aa).

The tract at residues 1 to 52 (MRLNTLSPAAGSKRVKHRPGRGIGSGLGKTGGRGVKGQTSRSGGGKVRNGFE) is disordered. Composition is skewed to gly residues over residues 21 to 35 (RGIGSGLGKTGGRGV) and 42 to 52 (SGGGKVRNGFE).

Belongs to the universal ribosomal protein uL15 family. As to quaternary structure, part of the 50S ribosomal subunit.

Functionally, binds to the 23S rRNA. This is Large ribosomal subunit protein uL15 from Aeromonas hydrophila subsp. hydrophila (strain ATCC 7966 / DSM 30187 / BCRC 13018 / CCUG 14551 / JCM 1027 / KCTC 2358 / NCIMB 9240 / NCTC 8049).